The primary structure comprises 497 residues: Cysteine-rich secretory protein LCCL domain-containing 2 (497 aa).

An N-terminal signal peptide occupies residues 1-22 (MSCVLGGVIPLGLLFLVCGSQG). Asn-27 carries an N-linked (GlcNAc...) asparagine glycan. Positions 62–200 (LHNKLRGQVQ…ENAVYFVCNY (139 aa)) constitute an SCP domain. LCCL domains lie at 284-379 (MTQV…SSSF) and 385-488 (KVQD…RDGK). 4 cysteine pairs are disulfide-bonded: Cys-290–Cys-308, Cys-312–Cys-332, Cys-391–Cys-413, and Cys-417–Cys-440.

Belongs to the CRISP family. In terms of assembly, binds to heparin, dermatan sulfate and chondroitin sulfate.

The protein localises to the secreted. Promotes matrix assembly. This Homo sapiens (Human) protein is Cysteine-rich secretory protein LCCL domain-containing 2 (CRISPLD2).